A 508-amino-acid chain; its full sequence is Protein adenylyltransferase fic-1 (508 aa).

The helical transmembrane segment at Thr44–Val64 threads the bilayer. TPR repeat units follow at residues Ala147–Asn180 and Pro181–Asn214. Residues Thr270 to Gly275 carry the Inhibitory (S/T)XXXE(G/N) motif motif. ATP is bound at residue Glu274. A Fido domain is found at Ile326–Lys461. The residue at position 352 (Thr352) is an O-AMP-threonine; by autocatalysis. ATP is bound at residue Val357–Phe360. His404 is an active-site residue. ATP contacts are provided by residues Asp408–Arg415, Tyr440–Tyr441, and Asn448. An O-AMP-threonine; by autocatalysis modification is found at Thr476. Residues Leu482–Asn508 form a disordered region. Positions Val496 to Asn508 are enriched in basic and acidic residues.

This sequence belongs to the fic family. In terms of assembly, forms homodimers; homodimerization might be required for adenylyltransferase activity. In terms of tissue distribution, ubiquitously expressed, with high expression in the germline.

The protein resides in the endoplasmic reticulum membrane. It localises to the nucleus membrane. The catalysed reaction is L-tyrosyl-[protein] + ATP = O-(5'-adenylyl)-L-tyrosyl-[protein] + diphosphate. The enzyme catalyses L-threonyl-[protein] + ATP = 3-O-(5'-adenylyl)-L-threonyl-[protein] + diphosphate. It carries out the reaction 3-O-(5'-adenylyl)-L-threonyl-[protein] + H2O = L-threonyl-[protein] + AMP + H(+). With respect to regulation, the side chain of Glu-274 determines which of the two opposing activities (AMPylase or de-AMPylase) will take place. In response to endoplasmic reticulum stress, mediates de-AMPylase activity. Adenylyltransferase activity is inhibited by the inhibitory helix present at the N-terminus: Glu-274 binds ATP and competes with ATP-binding at Arg-415, thereby preventing adenylyltransferase activity. In unstressed cells, disengagement of Glu-274 promotes adenylyltransferase activity. Activation dissociates ATP-binding from Glu-274, allowing ordered binding of the entire ATP moiety with the alpha-phosphate in an orientation that is productive for accepting an incoming target hydroxyl side chain. In terms of biological role, protein that can both mediate the addition of adenosine 5'-monophosphate (AMP) to specific residues of target proteins (AMPylation), and the removal of the same modification from target proteins (de-AMPylation), depending on the context. The side chain of Glu-274 determines which of the two opposing activities (AMPylase or de-AMPylase) will take place. Adenylyltransferase that mediates the addition of adenosine 5'-monophosphate (AMP) to specific residues of target proteins. In vivo target proteins include the heat-shock 70 family proteins hsp-1 and hsp-3 and the translation elongation factors eef-1A, eef-1G and eef-2. Can AMPylate core histone H3 in vitro. Can also act as a phosphodiesterase by mediating removal of ATP (de-AMPylation) from target proteins. Decreases susceptibility to P.aeruginosa-mediated killing and might therefore play a role in the innate immune response. The polypeptide is Protein adenylyltransferase fic-1 (Caenorhabditis elegans).